The chain runs to 587 residues: Arginine--tRNA ligase (587 aa).

The short motif at 127–137 (PNLAKEMHVGH) is the 'HIGH' region element.

This sequence belongs to the class-I aminoacyl-tRNA synthetase family. In terms of assembly, monomer.

It localises to the cytoplasm. It carries out the reaction tRNA(Arg) + L-arginine + ATP = L-arginyl-tRNA(Arg) + AMP + diphosphate. In Pseudomonas paraeruginosa (strain DSM 24068 / PA7) (Pseudomonas aeruginosa (strain PA7)), this protein is Arginine--tRNA ligase.